We begin with the raw amino-acid sequence, 87 residues long: Alpha-toxin To2 (87 aa).

An N-terminal signal peptide occupies residues 1–20; that stretch reads MIRFVLFISCFFLIGTVVEC. Positions 22-84 constitute an LCN-type CS-alpha/beta domain; that stretch reads KDGYLMEGDG…IWDSKNNKCG (63 aa). Intrachain disulfides connect Cys-32–Cys-83, Cys-36–Cys-58, Cys-44–Cys-64, and Cys-48–Cys-66. Residue Lys-85 is modified to Lysine amide.

In terms of tissue distribution, expressed by the venom gland.

Its subcellular location is the secreted. Functionally, alpha toxins bind voltage-independently at site-3 of sodium channels (Nav) and inhibit the inactivation of the activated channels, thereby blocking neuronal transmission. Affects the tetrodotoxin-sensitive sodium current permeability of F-11 rat neuroblastoma cells. Produces a dose dependent increase in amplitude and duration of the current. This is Alpha-toxin To2 from Tityus obscurus (Amazonian scorpion).